A 215-amino-acid chain; its full sequence is MANVYDWFEERLEIQAIAEDVTSKYVPPHVNIFYCLGGITLVCFLIQFATGFAMTFYYKPTVAEAYSSVQYIMNEVNFGWLIRSIHRWSASMMVLMMILHVFRVYLTGGFKKPRELTWVSGVILAVITVSFGVTGYSLPWDQVGYWAVKIVSGVPEAIPVVGVLISDLLRGGSSVGQATLTRYYSAHTFVLPWLIAVFMLFHFLMIRKQGISGPL.

Residues 32-52 (IFYCLGGITLVCFLIQFATGF) form a helical membrane-spanning segment. C35 lines the heme c pocket. Positions 86 and 100 each coordinate heme b. 3 helical membrane passes run 90–110 (ASMM…TGGF), 116–136 (LTWV…VTGY), and 186–206 (AHTF…FLMI). The heme b site is built by H187 and H202.

The protein belongs to the cytochrome b family. PetB subfamily. The 4 large subunits of the cytochrome b6-f complex are cytochrome b6, subunit IV (17 kDa polypeptide, PetD), cytochrome f and the Rieske protein, while the 4 small subunits are PetG, PetL, PetM and PetN. The complex functions as a dimer. It depends on heme b as a cofactor. The cofactor is heme c.

The protein resides in the cellular thylakoid membrane. In terms of biological role, component of the cytochrome b6-f complex, which mediates electron transfer between photosystem II (PSII) and photosystem I (PSI), cyclic electron flow around PSI, and state transitions. The protein is Cytochrome b6 of Trichormus variabilis (strain ATCC 29413 / PCC 7937) (Anabaena variabilis).